We begin with the raw amino-acid sequence, 191 residues long: Large ribosomal subunit protein bL9c (191 aa).

Residues 1-35 (MASPSCASTLPWTAAAFSYPRRLQTRRAPSLVIVA) constitute a chloroplast transit peptide.

This sequence belongs to the bacterial ribosomal protein bL9 family. Part of the 50S ribosomal subunit.

It is found in the plastid. The protein resides in the chloroplast. Its function is as follows. Binds to the 23S rRNA. The polypeptide is Large ribosomal subunit protein bL9c (RPL9) (Triticum aestivum (Wheat)).